We begin with the raw amino-acid sequence, 38 residues long: MNVIFKLYLTIDAPKKKKVTVRDFLSIRYSMPYRLASN.

This is an uncharacterized protein from Saccharomyces cerevisiae (strain ATCC 204508 / S288c) (Baker's yeast).